A 152-amino-acid chain; its full sequence is Protein IpgF (152 aa).

The signal sequence occupies residues 1–17 (MSRFVFILLCFIPHLGR).

It belongs to the IagB/IpgF/P19 family.

The chain is Protein IpgF (ipgF) from Shigella flexneri.